The sequence spans 29 residues: Dermaseptin-H7 (29 aa).

A Leucine amide modification is found at L29.

It belongs to the frog skin active peptide (FSAP) family. Dermaseptin subfamily. In terms of tissue distribution, expressed by the skin glands.

It localises to the secreted. Functionally, has antibacterial activity against the Gram-negative bacterium E.coli and the Gram-positive bacterium S.aureus. Has antiprotozoal activity against L.amazonensis. Has antifungal activity. Has no hemolytic activity. The sequence is that of Dermaseptin-H7 from Pithecopus hypochondrialis (Orange-legged leaf frog).